A 150-amino-acid chain; its full sequence is MSTRWYPIYQRGNPQLRVFLPNFWMKLIRPTEEQPPNVVTFSVSMEMTKYDVRNYLEKIYKLPVVDVRTRIAMGETKKDQTYGYITKKDDVKLAYVTLPREESFVFPDFFSEKAEKQAKEEKSLDESKAGFRRFLDRNKKRPGTPGWFSI.

It belongs to the universal ribosomal protein uL23 family. Component of the mitochondrial ribosome large subunit (39S) which comprises a 16S rRNA and about 50 distinct proteins.

It is found in the mitochondrion. The chain is Large ribosomal subunit protein uL23m (mRpL23) from Drosophila melanogaster (Fruit fly).